Consider the following 449-residue polypeptide: MPNLEELWAYLNDKFREELTPVGYSTWIQTAKPVKLTKDKLEIEVPASLHKAYWEKNLVTKVVEGVYEFAQLEVDPVIMTKDELQPAPATDQRPAVEEDDQNLTFKAKTHLNPKYTFDRFVIGKGNQMAHAAALAVAEAPGTTYNPLFIYGGVGLGKTHLMQAIGNLVLDNNPAANIKYVTSENFANDFINSIQTKQQEQFRQEYRNVDLLLVDDIQFFGDKEATQEEFFHTFNTLYENMKQIVLTSDRLPNEIPKLQERLVSRFNKGLSVDVTPPDLETRIAILRNKADAEDLSIPDDTLSYIAGQIESNVRDLEGALVRVQAFSTMKNEDITTSLAADALKALKLDDRSGQLTIPQILNAVAKYFQLTVQDLKGKKRVKQIVIPRQIAMYLAREMTDNSLPKIGQEIGGKDHTTVIHAHEKIMASMTTDENLKAQVIELRNILKNRG.

Residues 1-72 (MPNLEELWAY…VEGVYEFAQL (72 aa)) are domain I, interacts with DnaA modulators. Positions 72–109 (LEVDPVIMTKDELQPAPATDQRPAVEEDDQNLTFKAKT) are domain II. Residues 110 to 326 (HLNPKYTFDR…GALVRVQAFS (217 aa)) are domain III, AAA+ region. ATP-binding residues include Gly-154, Gly-156, Lys-157, and Thr-158. The segment at 327 to 449 (TMKNEDITTS…ELRNILKNRG (123 aa)) is domain IV, binds dsDNA.

This sequence belongs to the DnaA family. In terms of assembly, oligomerizes as a right-handed, spiral filament on DNA at oriC.

The protein localises to the cytoplasm. In terms of biological role, plays an essential role in the initiation and regulation of chromosomal replication. ATP-DnaA binds to the origin of replication (oriC) to initiate formation of the DNA replication initiation complex once per cell cycle. Binds the DnaA box (a 9 base pair repeat at the origin) and separates the double-stranded (ds)DNA. Forms a right-handed helical filament on oriC DNA; dsDNA binds to the exterior of the filament while single-stranded (ss)DNA is stabiized in the filament's interior. The ATP-DnaA-oriC complex binds and stabilizes one strand of the AT-rich DNA unwinding element (DUE), permitting loading of DNA polymerase. After initiation quickly degrades to an ADP-DnaA complex that is not apt for DNA replication. Binds acidic phospholipids. This is Chromosomal replication initiator protein DnaA from Lacticaseibacillus casei (strain BL23) (Lactobacillus casei).